A 147-amino-acid polypeptide reads, in one-letter code: Ponticulin-like protein C2 (147 aa).

An N-terminal signal peptide occupies residues methionine 1–alanine 20. Asparagine 118 is lipidated: GPI-like-anchor amidated asparagine. N-linked (GlcNAc...) asparagine glycosylation occurs at asparagine 118. Residues serine 119–leucine 147 constitute a propeptide, removed in mature form.

Belongs to the ponticulin family. Post-translationally, the GPI-like-anchor contains a phosphoceramide group, rather than a phosphatidyl group.

It localises to the cell membrane. This Dictyostelium discoideum (Social amoeba) protein is Ponticulin-like protein C2 (ponC2).